Here is a 218-residue protein sequence, read N- to C-terminus: ATP phosphoribosyltransferase (218 aa).

Belongs to the ATP phosphoribosyltransferase family. Short subfamily. In terms of assembly, heteromultimer composed of HisG and HisZ subunits.

It localises to the cytoplasm. The enzyme catalyses 1-(5-phospho-beta-D-ribosyl)-ATP + diphosphate = 5-phospho-alpha-D-ribose 1-diphosphate + ATP. The protein operates within amino-acid biosynthesis; L-histidine biosynthesis; L-histidine from 5-phospho-alpha-D-ribose 1-diphosphate: step 1/9. Its function is as follows. Catalyzes the condensation of ATP and 5-phosphoribose 1-diphosphate to form N'-(5'-phosphoribosyl)-ATP (PR-ATP). Has a crucial role in the pathway because the rate of histidine biosynthesis seems to be controlled primarily by regulation of HisG enzymatic activity. This chain is ATP phosphoribosyltransferase, found in Burkholderia thailandensis (strain ATCC 700388 / DSM 13276 / CCUG 48851 / CIP 106301 / E264).